Consider the following 241-residue polypeptide: Uridylate kinase (241 aa).

Residue 14-17 (KLSG) coordinates ATP. The involved in allosteric activation by GTP stretch occupies residues 22–27 (GGLGMG). Gly-56 is a binding site for UMP. 2 residues coordinate ATP: Gly-57 and Arg-61. Residues Asp-77 and 138 to 145 (TGNPFFTT) each bind UMP. ATP contacts are provided by Thr-165, Tyr-171, and Asp-174.

The protein belongs to the UMP kinase family. Homohexamer.

The protein resides in the cytoplasm. The enzyme catalyses UMP + ATP = UDP + ADP. Its pathway is pyrimidine metabolism; CTP biosynthesis via de novo pathway; UDP from UMP (UMPK route): step 1/1. Its activity is regulated as follows. Allosterically activated by GTP. Inhibited by UTP. In terms of biological role, catalyzes the reversible phosphorylation of UMP to UDP. The polypeptide is Uridylate kinase (Psychrobacter sp. (strain PRwf-1)).